Reading from the N-terminus, the 64-residue chain is Large ribosomal subunit protein bL35 (64 aa).

The protein belongs to the bacterial ribosomal protein bL35 family.

This is Large ribosomal subunit protein bL35 from Vibrio vulnificus (strain CMCP6).